The following is a 58-amino-acid chain: Large ribosomal subunit protein bL32 (58 aa).

It belongs to the bacterial ribosomal protein bL32 family.

This chain is Large ribosomal subunit protein bL32, found in Thermobifida fusca (strain YX).